The following is a 487-amino-acid chain: Putative beta-glucosidase 35 (487 aa).

The signal sequence occupies residues 1 to 27 (MGIRMGRRLLLITLLLGALLCNNVAYA). Gln48 is a binding site for a beta-D-glucoside. N-linked (GlcNAc...) asparagine glycans are attached at residues Asn76 and Asn116. A beta-D-glucoside contacts are provided by residues His151 and 200-201 (NE). Residue Glu201 is the Proton donor of the active site. A disulfide bridge links Cys220 with Cys228. Position 344 (Tyr344) interacts with a beta-D-glucoside. A glycan (N-linked (GlcNAc...) asparagine) is linked at Asn369. Glu414 lines the a beta-D-glucoside pocket. The active-site Nucleophile is the Glu414. Asn418 and Asn419 each carry an N-linked (GlcNAc...) asparagine glycan. Position 458 (Phe458) interacts with a beta-D-glucoside.

This sequence belongs to the glycosyl hydrolase 1 family.

It catalyses the reaction Hydrolysis of terminal, non-reducing beta-D-glucosyl residues with release of beta-D-glucose.. This Oryza sativa subsp. japonica (Rice) protein is Putative beta-glucosidase 35 (BGLU35).